Here is a 568-residue protein sequence, read N- to C-terminus: MVFFPEEVVEHILGFLASHRDRNAVSLVCREWYRVERLSRRSVLVRNCYAARPERVHARFPGLRSLSVKGRPRFVPAGWGAAARPWVAACVAACPGLEELRLKRMVVTDGCLKLLACSFPNLKSLVLVGCQGFSTDGLATVATNCRFMKELDLQESLVEDRDSRWLGCFPKPSTLLESLNFSCLTGEVNSPALEILVARSPNLRSLRLNRSVPLDVLARILCRRPRLVDLCTGSFVRGNIVGAYAGLFNSFQHCSLLKSLSGFWDATSLFIPVIAPVCKNLTCLNLSSAPMVRSAYLIEFICQCKKLQQLWVLDHIGDEGLKIVASSCIQLQELRVFPANANARASTVTEEGLVAISAGCNKLQSVLYFCQRMTNSALITVAKNCPRFTSFRLCVLDPGSADAVTGQPLDEGYGAIVQSCKGLRRLCLSGLLTDTVFLYIGMYAERLEMLSVAFAGDTDDGMTYVLNGCKNLKKLEIRDSPFGDSALLAGMHQYEAMRSLWLSSCNVTLGGCKSLAASMANLNIEVMNRAASINEADNANDAKKVKKLYIYRTVAGPRGDAPEFISTF.

Residues 1–45 form the F-box domain; sequence MVFFPEEVVEHILGFLASHRDRNAVSLVCREWYRVERLSRRSVLV. 1D-myo-inositol hexakisphosphate contacts are provided by residues Lys-69, 103 to 104, and Arg-335; that span reads KR. Residues 338–343 are interaction with auxin-responsive proteins; sequence PANANA. 390-392 is a 1D-myo-inositol hexakisphosphate binding site; that stretch reads SFR. The interval 394–398 is interaction with auxin-responsive proteins; that stretch reads CVLDP. Arg-425 provides a ligand contact to 1D-myo-inositol hexakisphosphate. The segment at 453–454 is interaction with auxin-responsive proteins; sequence AF. 1D-myo-inositol hexakisphosphate is bound by residues 473–474 and Arg-498; that span reads KK.

Part of a SCF (SKP1-cullin-F-box) protein ligase complex. May interact with auxin and auxin-responsive proteins.

Its subcellular location is the nucleus. The protein operates within protein modification; protein ubiquitination. The sequence is that of Transport inhibitor response 1-like protein Os11g0515500 from Oryza sativa subsp. japonica (Rice).